Reading from the N-terminus, the 83-residue chain is Large ribosomal subunit protein eL37 (83 aa).

Residues Cys19, Cys22, Cys34, and Cys37 each contribute to the Zn(2+) site. The segment at 19-37 (CRRCGRNSYHVQWERCAAC) adopts a C4-type zinc-finger fold.

Belongs to the eukaryotic ribosomal protein eL37 family. Zn(2+) serves as cofactor.

Its function is as follows. Binds to the 23S rRNA. In Leishmania donovani, this protein is Large ribosomal subunit protein eL37 (RPL37).